Consider the following 325-residue polypeptide: Methionyl-tRNA formyltransferase (325 aa).

111 to 114 (SILP) provides a ligand contact to (6S)-5,6,7,8-tetrahydrofolate.

It belongs to the Fmt family.

It carries out the reaction L-methionyl-tRNA(fMet) + (6R)-10-formyltetrahydrofolate = N-formyl-L-methionyl-tRNA(fMet) + (6S)-5,6,7,8-tetrahydrofolate + H(+). Its function is as follows. Attaches a formyl group to the free amino group of methionyl-tRNA(fMet). The formyl group appears to play a dual role in the initiator identity of N-formylmethionyl-tRNA by promoting its recognition by IF2 and preventing the misappropriation of this tRNA by the elongation apparatus. The sequence is that of Methionyl-tRNA formyltransferase from Microcystis aeruginosa (strain NIES-843 / IAM M-2473).